Consider the following 166-residue polypeptide: Anterior gradient protein 3 (166 aa).

The N-terminal stretch at 1–21 (MMLHSALGLCLLLVTVSSNLA) is a signal peptide. The short motif at 163 to 166 (QSEL) is the Prevents secretion from ER element.

The protein belongs to the AGR family. In terms of assembly, interacts with LYPD3 and DAG1 (alphaDAG1). Expressed in the lung, in the ciliated cells of the airway epithelium. Expression increased with differentiation of airway epithelial cells. Not detected in the mucous cells. Expressed in ciliated cells in the oviduct. Also detected in stomach, colon, prostate and liver. Expressed in breast, ovary, prostate and liver cancer. Expression is associated with the level of differentiation of breast cancer (at protein level).

The protein localises to the endoplasmic reticulum. Required for calcium-mediated regulation of ciliary beat frequency and mucociliary clearance in the airway. Might be involved in the regulation of intracellular calcium in tracheal epithelial cells. This Homo sapiens (Human) protein is Anterior gradient protein 3 (AGR3).